Consider the following 37-residue polypeptide: Alpha-conotoxin-like Kn1.2 (37 aa).

Positions 1–15 are enriched in basic and acidic residues; it reads ESDGAHAKARADKPA. A propeptide spanning residues 1–22 is cleaved from the precursor; that stretch reads ESDGAHAKARADKPARSATNRQ. The segment at 1-23 is disordered; that stretch reads ESDGAHAKARADKPARSATNRQP. Cystine bridges form between cysteine 25-cysteine 31 and cysteine 26-cysteine 36. Cysteine 36 bears the Cysteine amide mark.

It belongs to the conotoxin A superfamily. In terms of tissue distribution, expressed by the venom duct.

The protein resides in the secreted. Functionally, alpha-conotoxins act on postsynaptic membranes, they bind to the nicotinic acetylcholine receptors (nAChR) and thus inhibit them. This toxin inhibits high voltage-activated (HVA) calcium channel currents in rat DRG neurons (13% inhibition at 1 uM toxin) probably by activating GABA(B) receptors (GABBR1 and/or GABBR2). This is Alpha-conotoxin-like Kn1.2 from Conus kinoshitai (Kinoshita's cone).